The sequence spans 128 residues: ILVQTAPAGPIDVLIGRPALQRPDIAPRHHAPPHRAEREAVEADRSRRTAGDGWGFAGLRQLPAHAGGQHQQGREGQEKASGRRHVRCHIPLCALSVHTTMHTHALSGIATDGHRRFRRRHLCRPRAS.

The interval 21-84 is disordered; that stretch reads QRPDIAPRHH…EGQEKASGRR (64 aa). Composition is skewed to basic and acidic residues over residues 34-50 and 72-81; these read HRAE…RRTA and QGREGQEKAS.

It belongs to the histidinol dehydrogenase family.

The enzyme catalyses L-histidinol + 2 NAD(+) + H2O = L-histidine + 2 NADH + 3 H(+). It functions in the pathway amino-acid biosynthesis; L-histidine biosynthesis; L-histidine from 5-phospho-alpha-D-ribose 1-diphosphate: step 9/9. Catalyzes the sequential NAD-dependent oxidations of L-histidinol to L-histidinaldehyde and then to L-histidine. The polypeptide is Putative histidinol dehydrogenase (hisD) (Azospirillum brasilense).